A 138-amino-acid polypeptide reads, in one-letter code: Putative pre-16S rRNA nuclease (138 aa).

It belongs to the YqgF nuclease family.

Its subcellular location is the cytoplasm. Its function is as follows. Could be a nuclease involved in processing of the 5'-end of pre-16S rRNA. This is Putative pre-16S rRNA nuclease from Helicobacter hepaticus (strain ATCC 51449 / 3B1).